The sequence spans 143 residues: Sperm mitochondrial-associated cysteine-rich protein (143 aa).

A phosphoserine mark is found at Ser-37, Ser-44, and Ser-110. The tract at residues 101–143 (CCSSENKTESDSDTSGQTLEKGSQSPQSPPGAQGNWNQKKSNK) is disordered. Residues 113-126 (DTSGQTLEKGSQSP) are compositionally biased toward polar residues. The residue at position 128 (Ser-128) is a Phosphoserine. The segment covering 134-143 (GNWNQKKSNK) has biased composition (polar residues).

Testis. Is selectively expressed in the spermatids of seminiferous tubules.

The protein resides in the cytoplasm. It localises to the mitochondrion membrane. Its function is as follows. Involved in sperm motility. Its absence is associated with genetic background dependent male infertility. Infertility may be due to reduced sperm motility in the female reproductive tract and inability to penetrate the oocyte zona pellucida. The protein is Sperm mitochondrial-associated cysteine-rich protein (Smcp) of Mus musculus (Mouse).